The following is a 67-amino-acid chain: DNA-directed RNA polymerase subunit omega (67 aa).

Belongs to the RNA polymerase subunit omega family. As to quaternary structure, the RNAP catalytic core consists of 2 alpha, 1 beta, 1 beta' and 1 omega subunit. When a sigma factor is associated with the core the holoenzyme is formed, which can initiate transcription.

The catalysed reaction is RNA(n) + a ribonucleoside 5'-triphosphate = RNA(n+1) + diphosphate. Its function is as follows. Promotes RNA polymerase assembly. Latches the N- and C-terminal regions of the beta' subunit thereby facilitating its interaction with the beta and alpha subunits. In Listeria innocua serovar 6a (strain ATCC BAA-680 / CLIP 11262), this protein is DNA-directed RNA polymerase subunit omega.